Reading from the N-terminus, the 655-residue chain is p-hydroxybenzoic acid efflux pump subunit AaeB (655 aa).

The next 10 membrane-spanning stretches (helical) occupy residues 13 to 33, 38 to 58, 69 to 89, 93 to 113, 121 to 141, 152 to 172, 370 to 390, 407 to 427, 431 to 451, and 481 to 501; these read FAVKLASAIVLTLFVGFHFQL, WAVLTAAIVAAGPAFAAGGEP, LRIIGTFIGCIAGLVIIIAMI, LLMILVCCIWAGFCTWISSLV, WGLAGYTALIIVITIQPEPLL, EIVVGIVCAIVADLIFSPRSI, LFWLWTGWTSGSGAMVMIAVV, FIYGTLAALPLGLLYFLVIIP, QSMLLLCLSLAVLGFFLGIEV, and LFLDSALGQIVGCVLAFTVIL.

The protein belongs to the aromatic acid exporter ArAE (TC 2.A.85) family.

The protein resides in the cell inner membrane. Functionally, forms an efflux pump with AaeA. Could function as a metabolic relief valve, allowing to eliminate certain compounds when they accumulate to high levels in the cell. The sequence is that of p-hydroxybenzoic acid efflux pump subunit AaeB from Escherichia fergusonii (strain ATCC 35469 / DSM 13698 / CCUG 18766 / IAM 14443 / JCM 21226 / LMG 7866 / NBRC 102419 / NCTC 12128 / CDC 0568-73).